The primary structure comprises 250 residues: MYKLVLVRHGESKWNKENLFTGWTDVKLSEKGVSEACEGGRILKEEGYSFDIAFSSMLVRANDTLNIILCELGQSYIDVEKSWRLNERHYGALQGLNKAETAEKYGEDKVLIWRRSYNVPPMPLDESDKRHPIHDSRYKNIPKSELPSTECLKDTVARVIPYWTDKIAKAILEGKRVIVAAHGNSLRALVKYLDNMSEEDILKLNIPTGIPLVYELDKNLKPVKHYYLGDEDKIKAAMESVANQGKKIDR.

Residues 8 to 15 (RHGESKWN), 21 to 22 (TG), arginine 60, 87 to 90 (ERHY), lysine 98, 114 to 115 (RR), and 183 to 184 (GN) each bind substrate. The Tele-phosphohistidine intermediate role is filled by histidine 9. Glutamate 87 (proton donor/acceptor) is an active-site residue.

This sequence belongs to the phosphoglycerate mutase family. BPG-dependent PGAM subfamily.

It catalyses the reaction (2R)-2-phosphoglycerate = (2R)-3-phosphoglycerate. The protein operates within carbohydrate degradation; glycolysis; pyruvate from D-glyceraldehyde 3-phosphate: step 3/5. In terms of biological role, catalyzes the interconversion of 2-phosphoglycerate and 3-phosphoglycerate. This chain is 2,3-bisphosphoglycerate-dependent phosphoglycerate mutase, found in Borrelia recurrentis (strain A1).